Here is a 661-residue protein sequence, read N- to C-terminus: FAST kinase domain-containing protein 3, mitochondrial (661 aa).

The RAP domain maps to 592-650 (VALCIDGPQRFCLDSKHLLGKEATKQRHLRLLGYQVVQLPYHELELLTSRLELVDYLQR).

It belongs to the FAST kinase family. Expression detected in spleen, testis, colon, heart, smooth muscle, kidney, brain, lung, liver, brown and white adipose tissue with highest expression in testis and smooth muscle.

It is found in the mitochondrion. In terms of biological role, required for normal mitochondrial respiration. Increases steady-state levels and half-lives of a subset of mature mitochondrial mRNAs MT-ND2, MT-ND3, MT-CYTB, MT-CO2, and MT-ATP8/6. Promotes MT-CO1 mRNA translation and increases mitochondrial complex IV assembly and activity. The protein is FAST kinase domain-containing protein 3, mitochondrial (Fastkd3) of Mus musculus (Mouse).